Consider the following 152-residue polypeptide: Transcriptional repressor NrdR (152 aa).

A zinc finger lies at 3–34; the sequence is CPKCTSIEDKVIDSRISKEGSTIRRRRECLEC. Residues 49-139 form the ATP-cone domain; that stretch reads IVVIKRDGRR…VYKEFRDVSE (91 aa).

Belongs to the NrdR family. Zn(2+) is required as a cofactor.

Its function is as follows. Negatively regulates transcription of bacterial ribonucleotide reductase nrd genes and operons by binding to NrdR-boxes. The protein is Transcriptional repressor NrdR of Opitutus terrae (strain DSM 11246 / JCM 15787 / PB90-1).